The following is a 329-amino-acid chain: MAQLPPKIPTMTTPNWPDFSSQKLPSIAATAAAAATAGPQQQNPSWMDEFLDFSATRRGTHRRSISDSIAFLEPPSSGVGNHHFDRFDDEQFMSMFNDDVHNNNHNHHHHHSINGNVGPTRSSSNTSTPSDHNSLSDDDNNKEAPPSDHDHHMDNNVANQNNAAGNNYNESDEVQSQCKTEPQDGPSANQNSGGSSGNRIHDPKRVKRILANRQSAQRSRVRKLQYISELERSVTSLQTEVSVLSPRVAFLDHQRLLLNVDNSAIKQRIAALAQDKIFKDAHQEALKREIERLRQVYHQQSLKKMENNVSDQSPADIKPSVEKEQLLNV.

Disordered stretches follow at residues 1–22 (MAQLPPKIPTMTTPNWPDFSSQ) and 98–204 (DDVH…HDPK). The segment covering 10–22 (TMTTPNWPDFSSQ) has biased composition (polar residues). The segment covering 119-133 (PTRSSSNTSTPSDHN) has biased composition (low complexity). Residues 139–154 (DNNKEAPPSDHDHHMD) show a composition bias toward basic and acidic residues. Residues 155-169 (NNVANQNNAAGNNYN) are compositionally biased toward low complexity. In terms of domain architecture, bZIP spans 202-254 (DPKRVKRILANRQSAQRSRVRKLQYISELERSVTSLQTEVSVLSPRVAFLDHQ). Positions 204-223 (KRVKRILANRQSAQRSRVRK) are basic motif. Residues 230–251 (LERSVTSLQTEVSVLSPRVAFL) are leucine-zipper. Over residues 304–313 (KMENNVSDQS) the composition is skewed to polar residues. Residues 304–329 (KMENNVSDQSPADIKPSVEKEQLLNV) form a disordered region. Residues 319–329 (PSVEKEQLLNV) are compositionally biased toward basic and acidic residues.

Forms heterodimers with BZIP18, BZIP43 and VIP1/BZIP51.

The protein resides in the nucleus. Functionally, transcriptional activator. This chain is Basic leucine zipper 61, found in Arabidopsis thaliana (Mouse-ear cress).